The following is a 341-amino-acid chain: LIM and senescent cell antigen-like-containing domain protein 2 (341 aa).

LIM zinc-binding domains follow at residues 13 to 74 (AVCQ…LFAP), 76 to 133 (CGSC…EKAK), 138 to 195 (YICQ…KMGV), 196 to 255 (PICG…LFGD), and 256 to 315 (VCYN…FPLE). Phenylalanine 22 carries the phosphoserine modification. Position 327 is a phosphothreonine (threonine 327). A Phosphoserine modification is found at serine 328.

In terms of assembly, interacts with TGFB1I1. Interacts with integrin-linked protein kinase 1 (ILK) via the first LIM domain, and in competition with LIMS1. Part of the heterotrimeric IPP complex composed of integrin-linked kinase (ILK), LIMS1 or LIMS2, and PARVA.

It is found in the nucleus. The protein localises to the cell junction. It localises to the focal adhesion. Its subcellular location is the cell membrane. Adapter protein in a cytoplasmic complex linking beta-integrins to the actin cytoskeleton, bridges the complex to cell surface receptor tyrosine kinases and growth factor receptors. Plays a role in modulating cell spreading and migration. The chain is LIM and senescent cell antigen-like-containing domain protein 2 (LIMS2) from Homo sapiens (Human).